The chain runs to 294 residues: Acetylglutamate kinase (294 aa).

Residues 63 to 64 (GG), arginine 85, and asparagine 188 each bind substrate.

The protein belongs to the acetylglutamate kinase family. ArgB subfamily.

The protein localises to the cytoplasm. It carries out the reaction N-acetyl-L-glutamate + ATP = N-acetyl-L-glutamyl 5-phosphate + ADP. It functions in the pathway amino-acid biosynthesis; L-arginine biosynthesis; N(2)-acetyl-L-ornithine from L-glutamate: step 2/4. Functionally, catalyzes the ATP-dependent phosphorylation of N-acetyl-L-glutamate. In Methanococcus maripaludis (strain C5 / ATCC BAA-1333), this protein is Acetylglutamate kinase.